The sequence spans 318 residues: 2-keto-3-deoxygluconate permease (318 aa).

10 helical membrane-spanning segments follow: residues 10–30 (LPGG…TLWP), 42–62 (GLIS…GATI), 82–102 (IAMA…GGVP), 109–129 (LSVL…YAAL), 139–159 (AGAV…LILG), 163–183 (LASF…LGFA), 194–214 (FFAQ…GNTL), 224–244 (ASGV…LLLA), 257–277 (VAAS…AGMA), and 289–309 (ALVA…TALY).

The protein belongs to the KdgT transporter family.

It is found in the cell inner membrane. It carries out the reaction 2-dehydro-3-deoxy-D-gluconate(in) + H(+)(in) = 2-dehydro-3-deoxy-D-gluconate(out) + H(+)(out). Its function is as follows. Catalyzes the proton-dependent uptake of 2-keto-3-deoxygluconate (KDG) into the cell. This Xanthomonas euvesicatoria pv. vesicatoria (strain 85-10) (Xanthomonas campestris pv. vesicatoria) protein is 2-keto-3-deoxygluconate permease.